The following is a 494-amino-acid chain: Glutamyl-tRNA(Gln) amidotransferase subunit A (494 aa).

Residues Lys72 and Ser147 each act as charge relay system in the active site. Ser171 serves as the catalytic Acyl-ester intermediate.

This sequence belongs to the amidase family. GatA subfamily. Heterotrimer of A, B and C subunits.

It carries out the reaction L-glutamyl-tRNA(Gln) + L-glutamine + ATP + H2O = L-glutaminyl-tRNA(Gln) + L-glutamate + ADP + phosphate + H(+). In terms of biological role, allows the formation of correctly charged Gln-tRNA(Gln) through the transamidation of misacylated Glu-tRNA(Gln) in organisms which lack glutaminyl-tRNA synthetase. The reaction takes place in the presence of glutamine and ATP through an activated gamma-phospho-Glu-tRNA(Gln). This chain is Glutamyl-tRNA(Gln) amidotransferase subunit A, found in Methylacidiphilum infernorum (isolate V4) (Methylokorus infernorum (strain V4)).